The chain runs to 259 residues: L-cysteine S-thiosulfotransferase subunit SoxA (259 aa).

The signal sequence occupies residues 1-23; that stretch reads MRKLWFLPILLGAVGGVSLYAIA. A Cytochrome c domain is found at 50-135; the sequence is VYAEQGRDMF…SIATYVATLS (86 aa). Residues Cys-70, Cys-73, His-74, Cys-108, Cys-171, Cys-174, and His-175 each contribute to the heme c site. Arg-216 lines the substrate pocket. Position 220 (Cys-220) interacts with heme c. The Cysteine persulfide intermediate role is filled by Cys-220.

Belongs to the SoxA family. Heterodimer of SoxA and SoxX. It depends on heme c as a cofactor. Post-translationally, cysteine persulfide at Cys-220.

It localises to the periplasm. It catalyses the reaction L-cysteinyl-[SoxY protein] + thiosulfate + 2 Fe(III)-[cytochrome c] = S-sulfosulfanyl-L-cysteinyl-[SoxY protein] + 2 Fe(II)-[cytochrome c] + 2 H(+). The catalysed reaction is S-sulfanyl-L-cysteinyl-[SoxY protein] + thiosulfate + 2 Fe(III)-[cytochrome c] = S-(2-sulfodisulfanyl)-L-cysteinyl-[SoxY protein] + 2 Fe(II)-[cytochrome c] + 2 H(+). C-type diheme cytochrome, which is part of the SoxAX cytochrome complex involved in sulfur oxidation. The SoxAX complex catalyzes the formation of a heterodisulfide bond between the conserved cysteine residue on a sulfur carrier SoxYZ complex subunit SoxY and thiosulfate or other inorganic sulfur substrates. This leads to the liberation of two electrons, which may be transferred from the SoxAX complex to another cytochrome c that then channels them into the respiratory electron transport chain. Some electrons may be used for reductive CO(2) fixation. This is L-cysteine S-thiosulfotransferase subunit SoxA from Hydrogenobacter thermophilus (strain DSM 6534 / IAM 12695 / TK-6).